Consider the following 296-residue polypeptide: GTPase Era (296 aa).

The region spanning 3-170 is the Era-type G domain; that stretch reads KSGFITIVGR…LELMVKYLPE (168 aa). The segment at 11 to 18 is G1; it reads GRPNVGKS. GTP is bound at residue 11–18; that stretch reads GRPNVGKS. The interval 37-41 is G2; sequence QTTRN. Residues 58 to 61 form a G3 region; sequence DTPG. Residues 58–62 and 120–123 contribute to the GTP site; these read DTPGI and NKVD. The tract at residues 120-123 is G4; it reads NKVD. The tract at residues 149–151 is G5; sequence ISA. A KH type-2 domain is found at 201 to 278; that stretch reads LSQEVPHGIA…NIKIWVKVRK (78 aa).

This sequence belongs to the TRAFAC class TrmE-Era-EngA-EngB-Septin-like GTPase superfamily. Era GTPase family. Monomer.

Its subcellular location is the cytoplasm. The protein localises to the cell membrane. Its function is as follows. An essential GTPase that binds both GDP and GTP, with rapid nucleotide exchange. Plays a role in 16S rRNA processing and 30S ribosomal subunit biogenesis and possibly also in cell cycle regulation and energy metabolism. This Clostridium perfringens (strain 13 / Type A) protein is GTPase Era.